A 492-amino-acid chain; its full sequence is NADPH:adrenodoxin oxidoreductase, mitochondrial (492 aa).

Residues 1–32 (MAPRCWRWWPWSSWTRTRLPPSRSIQNFGQHF) constitute a mitochondrion transit peptide. The FAD site is built by A49, E70, L78, and V114. NADP(+) contacts are provided by residues 185-188 (QGNV), 229-230 (RR), and E241. Residues S311 and S318 each carry the phosphoserine modification. FAD-binding positions include W399 and 406–408 (GVI). Position 406 (G406) interacts with NADP(+).

This sequence belongs to the ferredoxin--NADP reductase type 1 family. As to quaternary structure, monomer. Interacts directly with FDX1. FAD is required as a cofactor. In terms of tissue distribution, detected in adrenal cortex and corpus luteum (at protein level).

It localises to the mitochondrion inner membrane. It carries out the reaction 2 reduced [adrenodoxin] + NADP(+) + H(+) = 2 oxidized [adrenodoxin] + NADPH. The enzyme catalyses 2 reduced [2Fe-2S]-[ferredoxin] + NADP(+) + H(+) = 2 oxidized [2Fe-2S]-[ferredoxin] + NADPH. The protein operates within steroid metabolism; cholesterol metabolism. Functionally, serves as the first electron transfer protein in all the mitochondrial P450 systems including cholesterol side chain cleavage in all steroidogenic tissues, steroid 11-beta hydroxylation in the adrenal cortex, 25-OH-vitamin D3-24 hydroxylation in the kidney, and sterol C-27 hydroxylation in the liver. Also acts as a ferredoxin--NADP(+) reductase essential for coenzyme Q biosynthesis: together with FDX2, transfers the electrons required for the hydroxylation reaction performed by COQ6. This is NADPH:adrenodoxin oxidoreductase, mitochondrial (FDXR) from Bos taurus (Bovine).